The following is a 129-amino-acid chain: ATP synthase epsilon chain (129 aa).

Belongs to the ATPase epsilon chain family. In terms of assembly, F-type ATPases have 2 components, CF(1) - the catalytic core - and CF(0) - the membrane proton channel. CF(1) has five subunits: alpha(3), beta(3), gamma(1), delta(1), epsilon(1). CF(0) has three main subunits: a, b and c.

The protein resides in the cell inner membrane. Produces ATP from ADP in the presence of a proton gradient across the membrane. This chain is ATP synthase epsilon chain, found in Campylobacter jejuni subsp. doylei (strain ATCC BAA-1458 / RM4099 / 269.97).